Reading from the N-terminus, the 628-residue chain is Forkhead box protein O (628 aa).

T50 is subject to Phosphothreonine; by PKB/AKT1. S81 carries the post-translational modification Phosphoserine. Positions 101–207 form a DNA-binding region, fork-head; the sequence is WGNLSYADLI…ETSRYEKRRG (107 aa). Disordered regions lie at residues 188 to 210 and 223 to 270; these read KSVR…GRAK and GLND…SSCG. S196 carries the phosphoserine; by PKB/AKT1 modification. Polar residues-rich tracts occupy residues 227-236 and 261-270; these read ATPSPSSSVS and RASSNASSCG. At S264 the chain carries Phosphoserine; by PKB/AKT1. A phosphoserine mark is found at S267, S268, and S273. Disordered stretches follow at residues 327-373 and 398-451; these read SAAS…SLQP and NSVT…QQQQ. Residues 334-343 show a composition bias toward pro residues; that stretch reads TQPPPPPYPA. The segment covering 344-359 has biased composition (low complexity); sequence PQQQQQQQPQQQQAYT. The segment covering 411–423 has biased composition (polar residues); it reads SEPSSDSLNTYSN. Low complexity predominate over residues 438–451; that stretch reads QQQRQQQQQQQQQQ.

Interacts with melt.

The protein resides in the cytoplasm. It is found in the nucleus. Functionally, transcription factor involved in the regulation of the insulin signaling pathway. Consistently activates both the downstream target Thor\d4EBP and the feedback control target InR. Involved in negative regulation of the cell cycle, modulating cell growth and proliferation. In response to cellular stresses, such as nutrient deprivation or increased levels of reactive oxygen species, foxo is activated and inhibits growth through the action of target genes such as Thor. Foxo activated in the adult fat body can regulate lifespan in adults; an insulin peptide itself may function as one secondary messenger of insulin-regulated aging. Also regulates Lip4, homolog of human acid lipases, thereby acting as a key modulator of lipid metabolism by insulin signaling and integrates insulin responses to glucose and lipid homeostasis. The polypeptide is Forkhead box protein O (Drosophila willistoni (Fruit fly)).